Reading from the N-terminus, the 424-residue chain is Serine--tRNA ligase (424 aa).

The tract at residues 109–129 (QEDVPYGESEEDNREERKWGD) is disordered. 231–233 (TAE) is an L-serine binding site. 262–264 (RSE) lines the ATP pocket. Glu-285 is an L-serine binding site. 349-352 (EISS) contributes to the ATP binding site. Ser-385 is an L-serine binding site.

Belongs to the class-II aminoacyl-tRNA synthetase family. Type-1 seryl-tRNA synthetase subfamily. As to quaternary structure, homodimer. The tRNA molecule binds across the dimer.

The protein localises to the cytoplasm. The catalysed reaction is tRNA(Ser) + L-serine + ATP = L-seryl-tRNA(Ser) + AMP + diphosphate + H(+). It catalyses the reaction tRNA(Sec) + L-serine + ATP = L-seryl-tRNA(Sec) + AMP + diphosphate + H(+). The protein operates within aminoacyl-tRNA biosynthesis; selenocysteinyl-tRNA(Sec) biosynthesis; L-seryl-tRNA(Sec) from L-serine and tRNA(Sec): step 1/1. Catalyzes the attachment of serine to tRNA(Ser). Is also able to aminoacylate tRNA(Sec) with serine, to form the misacylated tRNA L-seryl-tRNA(Sec), which will be further converted into selenocysteinyl-tRNA(Sec). The chain is Serine--tRNA ligase from Shouchella clausii (strain KSM-K16) (Alkalihalobacillus clausii).